The chain runs to 188 residues: Elongation factor P (188 aa).

This sequence belongs to the elongation factor P family.

The protein localises to the cytoplasm. It functions in the pathway protein biosynthesis; polypeptide chain elongation. In terms of biological role, involved in peptide bond synthesis. Stimulates efficient translation and peptide-bond synthesis on native or reconstituted 70S ribosomes in vitro. Probably functions indirectly by altering the affinity of the ribosome for aminoacyl-tRNA, thus increasing their reactivity as acceptors for peptidyl transferase. In Sulfurimonas denitrificans (strain ATCC 33889 / DSM 1251) (Thiomicrospira denitrificans (strain ATCC 33889 / DSM 1251)), this protein is Elongation factor P.